Consider the following 173-residue polypeptide: Disulfide bond formation protein B (173 aa).

Residues 1–16 are Cytoplasmic-facing; it reads MRILSSLKTFSQSRLS. The chain crosses the membrane as a helical span at residues 17-33; it reads WLLLLAFVVFFTLCAMY. Residues 34 to 51 lie on the Periplasmic side of the membrane; it reads FQHVMLLAPCVMCIYERI. An intrachain disulfide couples Cys-43 to Cys-46. A helical transmembrane segment spans residues 52–67; it reads AMLGIGVAALIGAIAP. Over 68–74 the chain is Cytoplasmic; it reads QNPVVRW. The helical transmembrane segment at 75–92 threads the bilayer; that stretch reads LGFAAWGASSYKGLMLAI. Topologically, residues 93 to 147 are periplasmic; that stretch reads EHVNYQFNPSPFATCDLFVTFPAWAPLNQWAPNLFEAYGDCSKVVWQFLTLSMPQ. A disulfide bridge links Cys-107 with Cys-133. Residues 148–166 form a helical membrane-spanning segment; the sequence is WLVVIFAANLLALAIFVVA. Topologically, residues 167–173 are cytoplasmic; that stretch reads QLAKTSR.

It belongs to the DsbB family.

It localises to the cell inner membrane. Required for disulfide bond formation in some periplasmic proteins. Acts by oxidizing the DsbA protein. The polypeptide is Disulfide bond formation protein B (Vibrio cholerae serotype O1 (strain ATCC 39315 / El Tor Inaba N16961)).